The following is a 141-amino-acid chain: Cystatin-13 (141 aa).

Residues 1–24 (MARFLQTLLFLVIMVEFVSRRVEA) form the signal peptide. Residues 76-80 (QITDS) form a secondary area of contact region. 2 disulfide bridges follow: Cys-94-Cys-104 and Cys-118-Cys-138.

The protein belongs to the cystatin family. As to expression, expressed exclusively in testis. Found in spermatagonia, spermatocytes, round spermatids, elongating spermatids and spermatozoa.

The protein resides in the secreted. It localises to the cytoplasm. In terms of biological role, may perform a specialized role during sperm development and maturation. This is Cystatin-13 from Mus musculus (Mouse).